The primary structure comprises 107 residues: Polyketide synthase CurG (107 aa).

It participates in antibiotic biosynthesis; curamycin biosynthesis. This chain is Polyketide synthase CurG (curG), found in Streptomyces cyaneus (Streptomyces curacoi).